The chain runs to 233 residues: Adenosylcobinamide-GDP ribazoletransferase (233 aa).

7 helical membrane-spanning segments follow: residues 24–44 (LWAL…VLYL), 46–66 (LPLS…LLHL), 96–116 (IAGV…LPLL), 117–137 (PFYA…LALA), 158–178 (QLTL…YIEP), 181–198 (ISSL…RLSL), and 209–229 (IGAV…VVWV).

It belongs to the CobS family. The cofactor is Mg(2+).

It localises to the cell membrane. It catalyses the reaction alpha-ribazole + adenosylcob(III)inamide-GDP = adenosylcob(III)alamin + GMP + H(+). The catalysed reaction is alpha-ribazole 5'-phosphate + adenosylcob(III)inamide-GDP = adenosylcob(III)alamin 5'-phosphate + GMP + H(+). The protein operates within cofactor biosynthesis; adenosylcobalamin biosynthesis; adenosylcobalamin from cob(II)yrinate a,c-diamide: step 7/7. Functionally, joins adenosylcobinamide-GDP and alpha-ribazole to generate adenosylcobalamin (Ado-cobalamin). Also synthesizes adenosylcobalamin 5'-phosphate from adenosylcobinamide-GDP and alpha-ribazole 5'-phosphate. The sequence is that of Adenosylcobinamide-GDP ribazoletransferase from Thermococcus gammatolerans (strain DSM 15229 / JCM 11827 / EJ3).